Reading from the N-terminus, the 318-residue chain is HPr kinase/phosphorylase (318 aa).

Active-site residues include His143 and Lys164. Residue 158–165 (GKSGVGKS) coordinates ATP. Ser165 lines the Mg(2+) pocket. Catalysis depends on Asp182, which acts as the Proton acceptor; for phosphorylation activity. Proton donor; for dephosphorylation activity. The tract at residues 206–215 (MEIRGLGILN) is important for the catalytic mechanism of both phosphorylation and dephosphorylation. Position 207 (Glu207) interacts with Mg(2+). Arg248 is a catalytic residue. Residues 269–274 (PVKPGR) form an important for the catalytic mechanism of dephosphorylation region.

This sequence belongs to the HPrK/P family. In terms of assembly, homohexamer. The cofactor is Mg(2+).

It catalyses the reaction [HPr protein]-L-serine + ATP = [HPr protein]-O-phospho-L-serine + ADP + H(+). The catalysed reaction is [HPr protein]-O-phospho-L-serine + phosphate + H(+) = [HPr protein]-L-serine + diphosphate. Its function is as follows. Catalyzes the ATP- as well as the pyrophosphate-dependent phosphorylation of a specific serine residue in HPr, a phosphocarrier protein of the phosphoenolpyruvate-dependent sugar phosphotransferase system (PTS). HprK/P also catalyzes the pyrophosphate-producing, inorganic phosphate-dependent dephosphorylation (phosphorolysis) of seryl-phosphorylated HPr (P-Ser-HPr). The polypeptide is HPr kinase/phosphorylase (Leptospira borgpetersenii serovar Hardjo-bovis (strain JB197)).